A 309-amino-acid chain; its full sequence is Probable 4-hydroxy-2-oxoglutarate aldolase, mitochondrial (309 aa).

49–50 (SN) is a binding site for substrate. Residue Lys173 is the Schiff-base intermediate with substrate of the active site.

This sequence belongs to the DapA family.

It carries out the reaction (4S)-4-hydroxy-2-oxoglutarate = glyoxylate + pyruvate. The catalysed reaction is (4R)-4-hydroxy-2-oxoglutarate = glyoxylate + pyruvate. Inhibited by divalent cations. Functionally, catalyzes the final step in the metabolic pathway of hydroxyproline. Involved in osmoadaptation. The polypeptide is Probable 4-hydroxy-2-oxoglutarate aldolase, mitochondrial (Emericella nidulans (strain FGSC A4 / ATCC 38163 / CBS 112.46 / NRRL 194 / M139) (Aspergillus nidulans)).